A 427-amino-acid chain; its full sequence is Methylenetetrahydrofolate--tRNA-(uracil-5-)-methyltransferase TrmFO (427 aa).

8-13 (GAGISG) serves as a coordination point for FAD.

This sequence belongs to the MnmG family. TrmFO subfamily. The cofactor is FAD.

It is found in the cytoplasm. The enzyme catalyses uridine(54) in tRNA + (6R)-5,10-methylene-5,6,7,8-tetrahydrofolate + NADH + H(+) = 5-methyluridine(54) in tRNA + (6S)-5,6,7,8-tetrahydrofolate + NAD(+). It carries out the reaction uridine(54) in tRNA + (6R)-5,10-methylene-5,6,7,8-tetrahydrofolate + NADPH + H(+) = 5-methyluridine(54) in tRNA + (6S)-5,6,7,8-tetrahydrofolate + NADP(+). Its function is as follows. Catalyzes the folate-dependent formation of 5-methyl-uridine at position 54 (M-5-U54) in all tRNAs. In Mycoplasmopsis agalactiae (strain NCTC 10123 / CIP 59.7 / PG2) (Mycoplasma agalactiae), this protein is Methylenetetrahydrofolate--tRNA-(uracil-5-)-methyltransferase TrmFO.